The sequence spans 455 residues: Tubby-like F-box protein 1 (455 aa).

In terms of domain architecture, F-box spans 54–112 (ETPWANLPPELLRDVIKRLEESESVWPARRHVVACASVCRSWRDMCKEIVQSPELSGKI). The interval 386–414 (QPQPQPQPQPQPQPLTQPQPSGQTDGPDK) is disordered. Residues 388–402 (QPQPQPQPQPQPLTQ) are compositionally biased toward pro residues.

This sequence belongs to the TUB family. In terms of tissue distribution, ubiquitous.

The chain is Tubby-like F-box protein 1 from Arabidopsis thaliana (Mouse-ear cress).